Here is a 438-residue protein sequence, read N- to C-terminus: Na(+)/H(+) antiporter NhaA 2 (438 aa).

11 helical membrane-spanning segments follow: residues 21-41, 66-86, 102-122, 130-150, 160-180, 183-203, 206-226, 308-328, 341-361, 376-396, and 410-430; these read SGGI…NSPW, LHHW…GLEL, MLPI…FHFI, KGWG…LALL, IFLT…IALF, GELA…LIAG, LGVQ…VVLL, WVIF…VLQL, LGVA…FSWI, WMDV…SLFI, and AKLG…TVLS.

The protein belongs to the NhaA Na(+)/H(+) (TC 2.A.33) antiporter family.

It is found in the cell inner membrane. The catalysed reaction is Na(+)(in) + 2 H(+)(out) = Na(+)(out) + 2 H(+)(in). In terms of biological role, na(+)/H(+) antiporter that extrudes sodium in exchange for external protons. In Syntrophotalea carbinolica (strain DSM 2380 / NBRC 103641 / GraBd1) (Pelobacter carbinolicus), this protein is Na(+)/H(+) antiporter NhaA 2.